Reading from the N-terminus, the 492-residue chain is N-succinylglutamate 5-semialdehyde dehydrogenase (492 aa).

NAD(+) is bound at residue 220 to 225; sequence GSANTG. Catalysis depends on residues Glu243 and Cys277.

It belongs to the aldehyde dehydrogenase family. AstD subfamily.

The catalysed reaction is N-succinyl-L-glutamate 5-semialdehyde + NAD(+) + H2O = N-succinyl-L-glutamate + NADH + 2 H(+). It functions in the pathway amino-acid degradation; L-arginine degradation via AST pathway; L-glutamate and succinate from L-arginine: step 4/5. Functionally, catalyzes the NAD-dependent reduction of succinylglutamate semialdehyde into succinylglutamate. The protein is N-succinylglutamate 5-semialdehyde dehydrogenase of Escherichia coli O127:H6 (strain E2348/69 / EPEC).